A 251-amino-acid chain; its full sequence is MSTILTTENLSLFYGKKEALKGINIDFDDKGITALIGPSGCGKSTFLRCLNRMNDLIPNVTITGEVNFNGHNIYAPTTDTVQLRKEIGMVFQQPNPFPFSIYENVIYGLRLAGVHDKERLDAAVEKSLKQAAIWDEVKDRLHANALSLSGGQQQRVCIARVLAVEPDIILLDEATSALDPISSRMIEETLLNLRQDYTIITVTHNMQQASRISDRTAFFLNGELIEVNDTKQIFMNPVKQETNDYISGRFG.

Residues 5–246 (LTTENLSLFY…PVKQETNDYI (242 aa)) form the ABC transporter domain. An ATP-binding site is contributed by 37–44 (GPSGCGKS).

Belongs to the ABC transporter superfamily. Phosphate importer (TC 3.A.1.7) family. As to quaternary structure, the complex is composed of two ATP-binding proteins (PstB), two transmembrane proteins (PstC and PstA) and a solute-binding protein (PstS).

It is found in the cell membrane. It catalyses the reaction phosphate(out) + ATP + H2O = ADP + 2 phosphate(in) + H(+). In terms of biological role, part of the ABC transporter complex PstSACB involved in phosphate import. Responsible for energy coupling to the transport system. This chain is Phosphate import ATP-binding protein PstB 2, found in Lactiplantibacillus plantarum (strain ATCC BAA-793 / NCIMB 8826 / WCFS1) (Lactobacillus plantarum).